The primary structure comprises 257 residues: Acetylglutamate kinase (257 aa).

Residues 43–44 (GG), arginine 65, and asparagine 157 each bind substrate. ATP contacts are provided by residues 180–185 (DVSGIL) and 208–210 (IIT).

Belongs to the acetylglutamate kinase family. ArgB subfamily. As to quaternary structure, homodimer.

Its subcellular location is the cytoplasm. The catalysed reaction is N-acetyl-L-glutamate + ATP = N-acetyl-L-glutamyl 5-phosphate + ADP. Its pathway is amino-acid biosynthesis; L-arginine biosynthesis; N(2)-acetyl-L-ornithine from L-glutamate: step 2/4. Functionally, catalyzes the ATP-dependent phosphorylation of N-acetyl-L-glutamate. The protein is Acetylglutamate kinase of Salmonella schwarzengrund (strain CVM19633).